Reading from the N-terminus, the 159-residue chain is 2-C-methyl-D-erythritol 2,4-cyclodiphosphate synthase (159 aa).

Aspartate 10 and histidine 12 together coordinate a divalent metal cation. 4-CDP-2-C-methyl-D-erythritol 2-phosphate-binding positions include 10–12 and 36–37; these read DVH and HS. Histidine 44 contributes to the a divalent metal cation binding site. 4-CDP-2-C-methyl-D-erythritol 2-phosphate-binding positions include 58–60, 63–67, 102–108, 134–137, phenylalanine 141, and arginine 144; these read DIG, FPDTD, AQAPKMA, and TTTE.

It belongs to the IspF family. As to quaternary structure, homotrimer. A divalent metal cation is required as a cofactor.

The enzyme catalyses 4-CDP-2-C-methyl-D-erythritol 2-phosphate = 2-C-methyl-D-erythritol 2,4-cyclic diphosphate + CMP. It participates in isoprenoid biosynthesis; isopentenyl diphosphate biosynthesis via DXP pathway; isopentenyl diphosphate from 1-deoxy-D-xylulose 5-phosphate: step 4/6. Its function is as follows. Involved in the biosynthesis of isopentenyl diphosphate (IPP) and dimethylallyl diphosphate (DMAPP), two major building blocks of isoprenoid compounds. Catalyzes the conversion of 4-diphosphocytidyl-2-C-methyl-D-erythritol 2-phosphate (CDP-ME2P) to 2-C-methyl-D-erythritol 2,4-cyclodiphosphate (ME-CPP) with a corresponding release of cytidine 5-monophosphate (CMP). The sequence is that of 2-C-methyl-D-erythritol 2,4-cyclodiphosphate synthase from Shewanella halifaxensis (strain HAW-EB4).